Reading from the N-terminus, the 181-residue chain is Oligoribonuclease (181 aa).

The region spanning 8 to 171 (LIWIDLEMTG…DDIRESVAEL (164 aa)) is the Exonuclease domain. Tyr129 is a catalytic residue.

Belongs to the oligoribonuclease family.

It localises to the cytoplasm. Its function is as follows. 3'-to-5' exoribonuclease specific for small oligoribonucleotides. The polypeptide is Oligoribonuclease (Photorhabdus laumondii subsp. laumondii (strain DSM 15139 / CIP 105565 / TT01) (Photorhabdus luminescens subsp. laumondii)).